The primary structure comprises 81 residues: ATP synthase subunit c (81 aa).

Helical transmembrane passes span 7 to 27 (AASVLAAALAVGLAAIGPGIG) and 57 to 77 (LAFMEALTIYGLVVALVLLFA).

Belongs to the ATPase C chain family. In terms of assembly, F-type ATPases have 2 components, F(1) - the catalytic core - and F(0) - the membrane proton channel. F(1) has five subunits: alpha(3), beta(3), gamma(1), delta(1), epsilon(1). F(0) has four main subunits: a(1), b(1), b'(1) and c(10-14). The alpha and beta chains form an alternating ring which encloses part of the gamma chain. F(1) is attached to F(0) by a central stalk formed by the gamma and epsilon chains, while a peripheral stalk is formed by the delta, b and b' chains.

The protein localises to the cellular thylakoid membrane. In terms of biological role, f(1)F(0) ATP synthase produces ATP from ADP in the presence of a proton or sodium gradient. F-type ATPases consist of two structural domains, F(1) containing the extramembraneous catalytic core and F(0) containing the membrane proton channel, linked together by a central stalk and a peripheral stalk. During catalysis, ATP synthesis in the catalytic domain of F(1) is coupled via a rotary mechanism of the central stalk subunits to proton translocation. Functionally, key component of the F(0) channel; it plays a direct role in translocation across the membrane. A homomeric c-ring of between 10-14 subunits forms the central stalk rotor element with the F(1) delta and epsilon subunits. The polypeptide is ATP synthase subunit c (Synechococcus elongatus (strain ATCC 33912 / PCC 7942 / FACHB-805) (Anacystis nidulans R2)).